We begin with the raw amino-acid sequence, 397 residues long: 2-acyl-1-lysophosphatidylinositol acyltransferase (397 aa).

The HXXXXD motif signature appears at 112-117 (HQIYTD).

It belongs to the 1-acyl-sn-glycerol-3-phosphate acyltransferase family.

The protein resides in the lipid droplet. It catalyses the reaction 1-heptadecanoyl-sn-glycero-3-phosphate + octadecanoyl-CoA = 1-heptadecanoyl-2-octadecanoyl-sn-glycero-3-phosphate + CoA. The enzyme catalyses 1-heptadecanoyl-sn-glycero-3-phosphate + tetradecanoyl-CoA = 1-heptadecanoyl-2-tetradecanoyl-sn-glycero-3-phosphate + CoA. It carries out the reaction 1-heptadecanoyl-sn-glycero-3-phosphate + hexadecanoyl-CoA = 1-heptadecanoyl-2-hexadecanoyl-sn-glycero-3-phosphate + CoA. Its function is as follows. Acyltransferase with lysophosphatidic acid acyltransferase (LPAAT) activity. Fatty acyl substrates include 18:0-acyl-CoA, 16:0-acyl-CoA, 17:0-acyl-CoA and 14:0-acyl-CoA. Responsible for the acyl-CoA-dependent introduction of saturated very long chain fatty acids (VLCFAs) into phosphatidylinositol, transferring saturated FAs with 18 to 26 carbon atoms. Responsible for the incorporation of stearate into phosphatidylinositol. Overexpression has an effect on chromosome stability. Regulates phosphorylation and expression of glycerol-3-phosphate acyltransferase SCT1. This Saccharomyces cerevisiae (strain ATCC 204508 / S288c) (Baker's yeast) protein is 2-acyl-1-lysophosphatidylinositol acyltransferase.